The primary structure comprises 373 residues: UDP-N-acetylglucosamine--N-acetylmuramyl-(pentapeptide) pyrophosphoryl-undecaprenol N-acetylglucosamine transferase (373 aa).

UDP-N-acetyl-alpha-D-glucosamine contacts are provided by residues 15 to 17 (TGG), Asn-126, Arg-170, Ser-198, and Gln-300.

This sequence belongs to the glycosyltransferase 28 family. MurG subfamily.

Its subcellular location is the cell inner membrane. It catalyses the reaction di-trans,octa-cis-undecaprenyl diphospho-N-acetyl-alpha-D-muramoyl-L-alanyl-D-glutamyl-meso-2,6-diaminopimeloyl-D-alanyl-D-alanine + UDP-N-acetyl-alpha-D-glucosamine = di-trans,octa-cis-undecaprenyl diphospho-[N-acetyl-alpha-D-glucosaminyl-(1-&gt;4)]-N-acetyl-alpha-D-muramoyl-L-alanyl-D-glutamyl-meso-2,6-diaminopimeloyl-D-alanyl-D-alanine + UDP + H(+). The protein operates within cell wall biogenesis; peptidoglycan biosynthesis. Cell wall formation. Catalyzes the transfer of a GlcNAc subunit on undecaprenyl-pyrophosphoryl-MurNAc-pentapeptide (lipid intermediate I) to form undecaprenyl-pyrophosphoryl-MurNAc-(pentapeptide)GlcNAc (lipid intermediate II). This chain is UDP-N-acetylglucosamine--N-acetylmuramyl-(pentapeptide) pyrophosphoryl-undecaprenol N-acetylglucosamine transferase, found in Methylobacterium nodulans (strain LMG 21967 / CNCM I-2342 / ORS 2060).